Reading from the N-terminus, the 162-residue chain is Ribosomal RNA large subunit methyltransferase H (162 aa).

Residues L78, G109, and 128–133 each bind S-adenosyl-L-methionine; that span reads LSPLTL.

Belongs to the RNA methyltransferase RlmH family. Homodimer.

The protein resides in the cytoplasm. The enzyme catalyses pseudouridine(1915) in 23S rRNA + S-adenosyl-L-methionine = N(3)-methylpseudouridine(1915) in 23S rRNA + S-adenosyl-L-homocysteine + H(+). Functionally, specifically methylates the pseudouridine at position 1915 (m3Psi1915) in 23S rRNA. The sequence is that of Ribosomal RNA large subunit methyltransferase H from Psychrobacter sp. (strain PRwf-1).